We begin with the raw amino-acid sequence, 172 residues long: Large ribosomal subunit protein uL10 (172 aa).

The protein belongs to the universal ribosomal protein uL10 family. In terms of assembly, part of the ribosomal stalk of the 50S ribosomal subunit. The N-terminus interacts with L11 and the large rRNA to form the base of the stalk. The C-terminus forms an elongated spine to which L12 dimers bind in a sequential fashion forming a multimeric L10(L12)X complex.

Functionally, forms part of the ribosomal stalk, playing a central role in the interaction of the ribosome with GTP-bound translation factors. The chain is Large ribosomal subunit protein uL10 from Beijerinckia indica subsp. indica (strain ATCC 9039 / DSM 1715 / NCIMB 8712).